The chain runs to 304 residues: 2-phospho-L-lactate transferase (304 aa).

Asp-49 serves as a coordination point for 7,8-didemethyl-8-hydroxy-5-deazariboflavin.

This sequence belongs to the CofD family. In terms of assembly, homodimer. Mg(2+) is required as a cofactor.

It carries out the reaction (2S)-lactyl-2-diphospho-5'-guanosine + 7,8-didemethyl-8-hydroxy-5-deazariboflavin = oxidized coenzyme F420-0 + GMP + H(+). The protein operates within cofactor biosynthesis; coenzyme F420 biosynthesis. In terms of biological role, catalyzes the transfer of the 2-phospholactate moiety from (2S)-lactyl-2-diphospho-5'-guanosine to 7,8-didemethyl-8-hydroxy-5-deazariboflavin (FO) with the formation of oxidized coenzyme F420-0 and GMP. This is 2-phospho-L-lactate transferase from Methanocorpusculum labreanum (strain ATCC 43576 / DSM 4855 / Z).